The chain runs to 367 residues: UDP-N-acetylglucosamine--N-acetylmuramyl-(pentapeptide) pyrophosphoryl-undecaprenol N-acetylglucosamine transferase (367 aa).

UDP-N-acetyl-alpha-D-glucosamine-binding positions include 15-17 (TGG), Asn-127, Arg-163, Ser-191, Ile-249, and Gln-294.

This sequence belongs to the glycosyltransferase 28 family. MurG subfamily.

It localises to the cell inner membrane. It carries out the reaction di-trans,octa-cis-undecaprenyl diphospho-N-acetyl-alpha-D-muramoyl-L-alanyl-D-glutamyl-meso-2,6-diaminopimeloyl-D-alanyl-D-alanine + UDP-N-acetyl-alpha-D-glucosamine = di-trans,octa-cis-undecaprenyl diphospho-[N-acetyl-alpha-D-glucosaminyl-(1-&gt;4)]-N-acetyl-alpha-D-muramoyl-L-alanyl-D-glutamyl-meso-2,6-diaminopimeloyl-D-alanyl-D-alanine + UDP + H(+). Its pathway is cell wall biogenesis; peptidoglycan biosynthesis. Functionally, cell wall formation. Catalyzes the transfer of a GlcNAc subunit on undecaprenyl-pyrophosphoryl-MurNAc-pentapeptide (lipid intermediate I) to form undecaprenyl-pyrophosphoryl-MurNAc-(pentapeptide)GlcNAc (lipid intermediate II). This Burkholderia pseudomallei (strain 668) protein is UDP-N-acetylglucosamine--N-acetylmuramyl-(pentapeptide) pyrophosphoryl-undecaprenol N-acetylglucosamine transferase.